A 966-amino-acid chain; its full sequence is Mitogen-activated protein kinase kinase kinase 13 (966 aa).

2 disordered regions span residues M1–K22 and S93–G112. Over residues A96–G112 the composition is skewed to polar residues. The Protein kinase domain occupies I168–I409. Residues L174–V182 and K195 each bind ATP. D279 (proton acceptor) is an active-site residue. 2 leucine-zipper regions span residues V433 to L454 and L486 to V507. 4 disordered regions span residues K534–H652, D744–R834, S846–L873, and D887–L906. Low complexity predominate over residues S567 to K581. The segment covering S582 to N594 has biased composition (basic residues). Composition is skewed to polar residues over residues Q609–P629 and F781–L795. A compositionally biased stretch (acidic residues) spans D814–V827. An acidic region spans residues S815–E828. Residues S846–V855 are compositionally biased toward polar residues.

Belongs to the protein kinase superfamily. STE Ser/Thr protein kinase family. MAP kinase kinase kinase subfamily. Homodimer; forms dimers through the leucine-zipper motif. Interacts with the C-terminus of MAPK8IP1 through the kinase catalytic domain. Binds PRDX3. Associates with the IKK complex through the kinase domain. Mg(2+) is required as a cofactor. Post-translationally, autophosphorylated on serine and threonine residues.

Its subcellular location is the cytoplasm. It localises to the membrane. The catalysed reaction is L-seryl-[protein] + ATP = O-phospho-L-seryl-[protein] + ADP + H(+). It catalyses the reaction L-threonyl-[protein] + ATP = O-phospho-L-threonyl-[protein] + ADP + H(+). Activated by autophosphorylation and homodimerization. Its function is as follows. Activates the JUN N-terminal pathway through activation of the MAP kinase kinase MAP2K7. Acts synergistically with PRDX3 to regulate the activation of NF-kappa-B in the cytosol. This activation is kinase-dependent and involves activating the IKK complex, the IKBKB-containing complex that phosphorylates inhibitors of NF-kappa-B. The polypeptide is Mitogen-activated protein kinase kinase kinase 13 (Pongo abelii (Sumatran orangutan)).